A 138-amino-acid chain; its full sequence is Actin-related protein 2/3 complex subunit 5 (138 aa).

Residues 1 to 21 are disordered; the sequence is MNYEDDNVESGQAGKSDAEYK.

It belongs to the ARPC5 family. In terms of assembly, component of the Arp2/3 complex composed of arpB/Arp2, arpC/Arp3, arcA/p41-arc, arcB/p34-arc, arcC/p21-arc, arcD/p20-arc and arcE/p16-arc. Interacts with carmil (via the region between the LRR domain and COOH-terminal proline-rich domain); carmil is required for Arp2/3-dependent actin nucleation. Arp2/3 complex, MyoB, MyoC, and the alpha and beta subunits of capping protein all form a larger complex with carmil.

Its subcellular location is the cytoplasm. It localises to the cytoskeleton. The protein resides in the cytosol. The protein localises to the cell cortex. It is found in the cell projection. Its subcellular location is the pseudopodium. Functionally, functions as a component of the Arp2/3 complex which is involved in regulation of actin polymerization and together with an activating nucleation-promoting factor (NPF) mediates the formation of branched actin networks. Seems to contact the pointed end of the daughter actin filament. The Arp2/3 complex is involved in organizing the actin system in cell motility and chemotaxis, in phagocytosis and macropinocytosis, at late steps of endosome processing, and in mitosis. In concert with a group of other proteins, the Arp2/3 complex plays a general role in the rapid activation and adaptation of the actin system to its multiple functions. This Dictyostelium discoideum (Social amoeba) protein is Actin-related protein 2/3 complex subunit 5 (arcE).